The chain runs to 833 residues: Putative GPI inositol-deacylase C (833 aa).

Ser130 is a catalytic residue. Asn191 and Asn456 each carry an N-linked (GlcNAc...) asparagine glycan. Transmembrane regions (helical) follow at residues 521 to 541 (ILFISLPSAILYAIFLVQFHA), 560 to 580 (YLLTSCLAGSGIAYLTGLSQV), 617 to 637 (VLAPIFTVFSTGMVVLITELV), 672 to 692 (TVFVAVISVLVLLFFPYQLAF), and 723 to 743 (TICVLMTWTCIINAPVLAVWI). N-linked (GlcNAc...) asparagine glycosylation is present at Asn772. A helical transmembrane segment spans residues 787–807 (LLLAYTSLHCLFYGMMQAFMI).

It belongs to the GPI inositol-deacylase family.

The protein resides in the endoplasmic reticulum membrane. Involved in inositol deacylation of GPI-anchored proteins which plays important roles in the quality control and ER-associated degradation of GPI-anchored proteins. In Yarrowia lipolytica (strain CLIB 122 / E 150) (Yeast), this protein is Putative GPI inositol-deacylase C (BST1C).